The primary structure comprises 785 residues: Putative endonuclease MutS2 (785 aa).

Residue 335 to 342 (GPNTGGKT) coordinates ATP. Positions 513–586 (TAEHNEVDTM…AEKVKAAMKE (74 aa)) form a coiled coil. Residues 636–785 (KRDFKPGDEV…GSGVTVVELK (150 aa)) form a partially complements a deletion for mitomycin C (MMC) resistance and for chromosomal DNA transformation region. Positions 641-681 (PGDEVKVLTFGQKGTLLEKTGGNEWNVQIGILKMKVKEKDL) are KOW region. Positions 710 to 785 (LDLRGERYEN…GSGVTVVELK (76 aa)) constitute a Smr domain.

This sequence belongs to the DNA mismatch repair MutS family. MutS2 subfamily. Binds to ribosomes as a homodimer. Binds to stalled/collided disomes, association is greater in (ribosome-targeted) antibiotic-treated cells (with increased stalling at specific mRNA sites). The clamp domain of one monomer binds the A-site finger, the 23S rRNA of the central protuberance and ribosomal protein uL5 of the leading (stalled) ribosome, while the other monomer binds in a gap between the ribosomal central protuberance and the L1 stalk of the leading ribosome.

Its subcellular location is the cytoplasm. Functionally, acts as a ribosome collision sensor splitting the ribosome into its 2 subunits. Detects stalled/collided disomes (pairs of ribosomes where the leading ribosome is stalled and a second ribosome has collided with it) which it binds and splits, by an ATP-hydrolysis driven conformational change. Does not seem to have endoribonuclease activity (in the context of ribosome stalling). Acts upstream of the ribosome quality control system (RQC), a ribosome-associated complex that mediates the extraction of incompletely synthesized nascent chains from stalled ribosomes and their subsequent degradation, probably generates substrates for RQC. In terms of biological role, does not seem to be involved in mismatch repair or in the prevention of interspecific recombination during DNA transformation. Might be involved in homologous recombination. Putative endonuclease that may be involved in the suppression of homologous recombination and may therefore have a key role in the control of bacterial genetic diversity. The chain is Putative endonuclease MutS2 from Bacillus subtilis (strain 168).